The following is a 186-amino-acid chain: Trafficking protein particle complex subunit 5 (186 aa).

Belongs to the TRAPP small subunits family. BET3 subfamily. As to quaternary structure, part of the multisubunit TRAPP (transport protein particle) complex.

The protein resides in the golgi apparatus. It localises to the cis-Golgi network. Its subcellular location is the endoplasmic reticulum. Functionally, may play a role in vesicular transport from endoplasmic reticulum to Golgi. This Dictyostelium discoideum (Social amoeba) protein is Trafficking protein particle complex subunit 5 (trappc5).